Consider the following 646-residue polypeptide: Phosphomethylpyrimidine synthase (646 aa).

Residues 1-13 show a composition bias toward polar residues; the sequence is MNIRSNPDTTRPA. The interval 1-21 is disordered; sequence MNIRSNPDTTRPAVTTGGLPS. Substrate contacts are provided by residues Asn-221, Met-250, Tyr-279, His-315, 335-337, 376-379, and Glu-415; these read SRG and DGLR. His-419 serves as a coordination point for Zn(2+). Tyr-442 lines the substrate pocket. Position 483 (His-483) interacts with Zn(2+). Residues Cys-563, Cys-566, and Cys-571 each coordinate [4Fe-4S] cluster.

Belongs to the ThiC family. As to quaternary structure, homodimer. It depends on [4Fe-4S] cluster as a cofactor.

The enzyme catalyses 5-amino-1-(5-phospho-beta-D-ribosyl)imidazole + S-adenosyl-L-methionine = 4-amino-2-methyl-5-(phosphooxymethyl)pyrimidine + CO + 5'-deoxyadenosine + formate + L-methionine + 3 H(+). It participates in cofactor biosynthesis; thiamine diphosphate biosynthesis. Functionally, catalyzes the synthesis of the hydroxymethylpyrimidine phosphate (HMP-P) moiety of thiamine from aminoimidazole ribotide (AIR) in a radical S-adenosyl-L-methionine (SAM)-dependent reaction. The protein is Phosphomethylpyrimidine synthase of Rhodopseudomonas palustris (strain HaA2).